A 573-amino-acid chain; its full sequence is DNA ligase (573 aa).

Glu-250 is an ATP binding site. Lys-252 functions as the N6-AMP-lysine intermediate in the catalytic mechanism. ATP contacts are provided by Arg-257, Arg-272, Glu-301, Phe-342, Arg-432, and Lys-438.

This sequence belongs to the ATP-dependent DNA ligase family. Mg(2+) is required as a cofactor.

The enzyme catalyses ATP + (deoxyribonucleotide)n-3'-hydroxyl + 5'-phospho-(deoxyribonucleotide)m = (deoxyribonucleotide)n+m + AMP + diphosphate.. DNA ligase that seals nicks in double-stranded DNA during DNA replication, DNA recombination and DNA repair. In Methanococcus maripaludis (strain DSM 14266 / JCM 13030 / NBRC 101832 / S2 / LL), this protein is DNA ligase.